The chain runs to 521 residues: ATP synthase subunit beta (521 aa).

Composition is skewed to low complexity over residues 1–21 (MAKA…AAKA) and 28–42 (PKTT…TKSG). Residues 1 to 42 (MAKAATPKTTAAAEAKPAAKAPAKKAAPKTTAAAKPAATKSG) are disordered. Residue 199-206 (GGAGVGKT) coordinates ATP.

It belongs to the ATPase alpha/beta chains family. F-type ATPases have 2 components, CF(1) - the catalytic core - and CF(0) - the membrane proton channel. CF(1) has five subunits: alpha(3), beta(3), gamma(1), delta(1), epsilon(1). CF(0) has three main subunits: a(1), b(2) and c(9-12). The alpha and beta chains form an alternating ring which encloses part of the gamma chain. CF(1) is attached to CF(0) by a central stalk formed by the gamma and epsilon chains, while a peripheral stalk is formed by the delta and b chains.

It localises to the cell inner membrane. The enzyme catalyses ATP + H2O + 4 H(+)(in) = ADP + phosphate + 5 H(+)(out). Produces ATP from ADP in the presence of a proton gradient across the membrane. The catalytic sites are hosted primarily by the beta subunits. This chain is ATP synthase subunit beta, found in Brucella canis (strain ATCC 23365 / NCTC 10854 / RM-666).